Reading from the N-terminus, the 475-residue chain is Ribulose bisphosphate carboxylase large chain (475 aa).

Residues 1–2 constitute a propeptide that is removed on maturation; that stretch reads MS. The residue at position 3 (P3) is an N-acetylproline. K14 carries the N6,N6,N6-trimethyllysine modification. 2 residues coordinate substrate: N123 and T173. The active-site Proton acceptor is the K175. K177 provides a ligand contact to substrate. Mg(2+) is bound by residues K201, D203, and E204. At K201 the chain carries N6-carboxylysine. H294 serves as the catalytic Proton acceptor. Substrate-binding residues include R295, H327, and S379.

This sequence belongs to the RuBisCO large chain family. Type I subfamily. Heterohexadecamer of 8 large chains and 8 small chains; disulfide-linked. The disulfide link is formed within the large subunit homodimers. Requires Mg(2+) as cofactor. In terms of processing, the disulfide bond which can form in the large chain dimeric partners within the hexadecamer appears to be associated with oxidative stress and protein turnover.

Its subcellular location is the plastid. It localises to the chloroplast. The enzyme catalyses 2 (2R)-3-phosphoglycerate + 2 H(+) = D-ribulose 1,5-bisphosphate + CO2 + H2O. The catalysed reaction is D-ribulose 1,5-bisphosphate + O2 = 2-phosphoglycolate + (2R)-3-phosphoglycerate + 2 H(+). In terms of biological role, ruBisCO catalyzes two reactions: the carboxylation of D-ribulose 1,5-bisphosphate, the primary event in carbon dioxide fixation, as well as the oxidative fragmentation of the pentose substrate in the photorespiration process. Both reactions occur simultaneously and in competition at the same active site. This is Ribulose bisphosphate carboxylase large chain from Chloranthus spicatus (Chulantree).